A 237-amino-acid chain; its full sequence is Large ribosomal subunit protein uL1 (237 aa).

It belongs to the universal ribosomal protein uL1 family. In terms of assembly, part of the 50S ribosomal subunit.

Binds directly to 23S rRNA. The L1 stalk is quite mobile in the ribosome, and is involved in E site tRNA release. Its function is as follows. Protein L1 is also a translational repressor protein, it controls the translation of the L11 operon by binding to its mRNA. This chain is Large ribosomal subunit protein uL1, found in Leptothrix cholodnii (strain ATCC 51168 / LMG 8142 / SP-6) (Leptothrix discophora (strain SP-6)).